A 1170-amino-acid chain; its full sequence is Short transient receptor potential channel 2 (1170 aa).

Residues 1 to 627 lie on the Cytoplasmic side of the membrane; that stretch reads MLMSLTDSKE…GWRGSTTIWK (627 aa). Disordered stretches follow at residues 64 to 113, 142 to 231, and 322 to 342; these read SLSD…QTST, AHKA…QATG, and ESGS…VEES. Residues 74–85 are compositionally biased toward polar residues; that stretch reads SPGSSGLNQNSS. The segment covering 158–177 has biased composition (basic and acidic residues); it reads GEPDSSHPERAEPRAEEPNR. ANK repeat units lie at residues 300 to 329, 346 to 376, 377 to 405, and 429 to 458; these read KFPP…DPSG, SWRE…DFRQ, IHEA…REKG, and PGVT…TIAR. Residues 628 to 648 traverse the membrane as a helical segment; sequence LFVAFLIFLTMPFLCIGYWLA. Residues 649–658 lie on the Extracellular side of the membrane; the sequence is PKSRLGRLLK. The chain crosses the membrane as a helical span at residues 659-679; sequence IPVLKFLLHSASYLWFLIFLL. Over 680–701 the chain is Cytoplasmic; sequence GESLVMETQLSTFKGRSQSVWE. The helical transmembrane segment at 702 to 722 threads the bilayer; it reads TSLHMIWVTGFLWFECKEVWI. Residues 723–737 are Extracellular-facing; the sequence is EGLRSYLLDWWNFLD. The chain crosses the membrane as a helical span at residues 738-758; sequence VVILSLYLASFALRLLLAGLA. The Cytoplasmic portion of the chain corresponds to 759 to 788; it reads YMHCRDASDSSTCRYFTTAERSEWRTEDPQ. Residues 789–809 traverse the membrane as a helical segment; it reads FLAEVLFAVTSMLSFTRLAYI. At 810–832 the chain is on the extracellular side; it reads LPAHESLGTLQISIGKMIDDMIR. Residues 833–853 form a helical membrane-spanning segment; the sequence is FMFILMIILTAFLCGLNNIYV. Residues 854–898 are Cytoplasmic-facing; that stretch reads PYQETEKLGNFNETFQFLFWTMFGMEEHSVVDMPQFLVPEFVGRA. A helical transmembrane segment spans residues 899–919; it reads MYGIFTIVMVIVLLNMLIAMI. Residues 920–1170 lie on the Extracellular side of the membrane; it reads TNSFQKIEDD…GEDLETKGES (251 aa). Residues 1030–1068 adopt a coiled-coil conformation; that stretch reads RREFEETRRKDLGNRLTELTKTVSRLQSEVASVQKTVAA. A disordered region spans residues 1118–1170; it reads LEDSLDATGEAGTPASGESSSSSSAHVLVHREQEAEGAGDLPLGEDLETKGES.

It belongs to the transient receptor (TC 1.A.4) family. STrpC subfamily. TRPC2 sub-subfamily. As to expression, expressed exclusively in vomeronasal organ neurons (sensory microvilli).

It localises to the membrane. Thought to form a receptor-activated calcium permeant cation channel. Probably is operated by a phosphatidylinositol second messenger system activated by receptor tyrosine kinases or G-protein coupled receptors. Is not activated by intracellular calcium store depletion. The polypeptide is Short transient receptor potential channel 2 (Trpc2) (Rattus norvegicus (Rat)).